The following is a 422-amino-acid chain: 5'-deoxyadenosine deaminase (422 aa).

Positions 57 and 59 each coordinate Zn(2+). Positions 86 and 178 each coordinate substrate. Histidine 205 provides a ligand contact to Zn(2+). Residues glutamate 208 and aspartate 294 each coordinate substrate. Aspartate 294 serves as a coordination point for Zn(2+).

It belongs to the metallo-dependent hydrolases superfamily. MTA/SAH deaminase family. As to quaternary structure, homotetramer. It depends on Zn(2+) as a cofactor.

It catalyses the reaction 5'-deoxyadenosine + H2O + H(+) = 5'-deoxyinosine + NH4(+). The catalysed reaction is S-adenosyl-L-homocysteine + H2O + H(+) = S-inosyl-L-homocysteine + NH4(+). The enzyme catalyses S-methyl-5'-thioadenosine + H2O + H(+) = S-methyl-5'-thioinosine + NH4(+). It carries out the reaction adenosine + H2O + H(+) = inosine + NH4(+). The protein operates within amino-acid biosynthesis; S-adenosyl-L-methionine biosynthesis. Catalyzes the deamination of three SAM-derived enzymatic products, namely 5'-deoxyadenosine, S-adenosyl-L-homocysteine, and 5'-methylthioadenosine, to produce the inosine analogs. Can also deaminate adenosine. The preferred substrate for this enzyme is 5'-deoxyadenosine, but all these substrates are efficiently deaminated. Likely functions in a S-adenosyl-L-methionine (SAM) recycling pathway from S-adenosyl-L-homocysteine (SAH) produced from SAM-dependent methylation reactions. May also be involved in the recycling of 5'-deoxyadenosine, whereupon the 5'-deoxyribose moiety of 5'-deoxyinosine is further metabolized to deoxyhexoses used for the biosynthesis of aromatic amino acids in methanogens. This is 5'-deoxyadenosine deaminase from Methanococcus maripaludis (strain C7 / ATCC BAA-1331).